The primary structure comprises 438 residues: MLDILLLRKDLDSAVARLETRKKPQAFLNVEAFQSLEAERKSLQTRTEELQSKRNQLSKQIGMLMGKGEKDAAEAAKAEVGSLKTELDQSATRLEQIQGELQTMLLAVPNLPHDSVPVGADESGNVEARRWGTPKTFDFEVKDHVDVGQPLGLDFDMGVKLSGSRFTVMKGPIARLHRALAQFMIDLQTDSHGYTECYVPYAVNADSLKGTGQLPKFEGDLFAAKKGGQDGEPVPDNAALYLIPTAEVPLTNFVRDVVVAEDQLPIKLTAHSPCFRSEAGSYGRDTRGMIRQHQFDKVEMVQIVHPEKSYEALEEMTGHAEAVLQKLGLPYRVMSLCTGDMGFGAAKTYDLEVWLPAQNTYREISSVSNCEAFQARRLQARFKNAQGKNELVHTLNGSGLAVGRTLVAVLENYQNADGSVTIPEALRPYMGGQTLLKA.

245–247 is a binding site for L-serine; sequence TAE. 276–278 contacts ATP; the sequence is RSE. Glutamate 299 is a binding site for L-serine. 363–366 provides a ligand contact to ATP; it reads EISS. Serine 398 serves as a coordination point for L-serine.

Belongs to the class-II aminoacyl-tRNA synthetase family. Type-1 seryl-tRNA synthetase subfamily. As to quaternary structure, homodimer. The tRNA molecule binds across the dimer.

It is found in the cytoplasm. The enzyme catalyses tRNA(Ser) + L-serine + ATP = L-seryl-tRNA(Ser) + AMP + diphosphate + H(+). The catalysed reaction is tRNA(Sec) + L-serine + ATP = L-seryl-tRNA(Sec) + AMP + diphosphate + H(+). It functions in the pathway aminoacyl-tRNA biosynthesis; selenocysteinyl-tRNA(Sec) biosynthesis; L-seryl-tRNA(Sec) from L-serine and tRNA(Sec): step 1/1. Catalyzes the attachment of serine to tRNA(Ser). Is also able to aminoacylate tRNA(Sec) with serine, to form the misacylated tRNA L-seryl-tRNA(Sec), which will be further converted into selenocysteinyl-tRNA(Sec). The polypeptide is Serine--tRNA ligase (Delftia acidovorans (strain DSM 14801 / SPH-1)).